The sequence spans 290 residues: Protein SSO1 (290 aa).

At 1-265 (MSYNNPYQLE…ARKARKNKIR (265 aa)) the chain is on the cytoplasmic side. The region spanning 190–252 (LAEVQARHQE…EQGVGHTDKA (63 aa)) is the t-SNARE coiled-coil homology domain. A helical; Anchor for type IV membrane protein transmembrane segment spans residues 266 to 287 (CWLIVFAIIVVVVVVVVVPAVV). Topologically, residues 288–290 (KTR) are extracellular.

This sequence belongs to the syntaxin family.

It is found in the membrane. Its function is as follows. Required for vesicle fusion with the plasma membrane. The protein is Protein SSO1 (SSO1) of Saccharomyces cerevisiae (strain ATCC 204508 / S288c) (Baker's yeast).